A 605-amino-acid polypeptide reads, in one-letter code: Formin-binding protein 1-like (605 aa).

Residues 1-263 (MSWGTELWDQ…AAKSVDERRD (263 aa)) enclose the F-BAR domain. Residues 66-258 (FTSCIAFFNI…EGMILAAKSV (193 aa)) adopt a coiled-coil conformation. The segment at 245–535 (SKCLEGMILA…EFDDEFEDDD (291 aa)) is interaction with CDC42. At S295 the chain carries Phosphoserine. The tract at residues 325-345 (FGKKPKPQSPPLTPTSLFTSS) is disordered. Residues 392 to 484 (LEDFSHLPPE…VEGKTGVRGD (93 aa)) adopt a coiled-coil conformation. One can recognise an REM-1 domain in the interval 397 to 474 (HLPPEQRRKK…IHKNEAWLSE (78 aa)). The segment covering 480-490 (GVRGDRRHSSD) has biased composition (basic and acidic residues). The interval 480-539 (GVRGDRRHSSDINHLVTQGRESPEGSYTDDANQEVRGPPQQHGHHSEFDDEFEDDDPLPA) is disordered. Phosphoserine is present on residues S488, S501, and S505. The tract at residues 522–605 (GHHSEFDDEF…VTLEKNSKGS (84 aa)) is interaction with DNM1. Over residues 527–536 (FDDEFEDDDP) the composition is skewed to acidic residues. The SH3 domain occupies 538-599 (PAIGHCKAIY…PTTYIDVTLE (62 aa)). Positions 541 to 597 (GHCKAIYPFDGHNEGTLAMKEGEVLYIIEEDKGDGWTRARRQNGEEGYVPTTYIDVT) are interaction with DNM2 and WASL. The interaction with DAAM1, DIAPH1 and DIAPH2 stretch occupies residues 541–605 (GHCKAIYPFD…VTLEKNSKGS (65 aa)).

This sequence belongs to the FNBP1 family. Homodimerizes, the dimers can polymerize end-to-end to form filamentous structures. Interacts with GTP-bound CDC42. Interacts with DAAM1, DIAPH1, DIAPH2, DNM1, DNM2 and WASL/N-WASP. Interacts with ATG3. Interacts (via SH3 domain) with ABI1, WASF2, CDC42 and WIPF1. As to expression, isoform 1 is expressed in brain. Isoform 2 is expressed in brain, kidney and lung. Within the brain expression is seen in cortical neurons, hippocampal pyramidal neurons, hypothalamus and piriform cortex.

It is found in the cytoplasm. The protein resides in the cytoskeleton. Its subcellular location is the cell cortex. The protein localises to the cytoplasmic vesicle. It localises to the cell membrane. Its function is as follows. Required to coordinate membrane tubulation with reorganization of the actin cytoskeleton during endocytosis. May bind to lipids such as phosphatidylinositol 4,5-bisphosphate and phosphatidylserine and promote membrane invagination and the formation of tubules. Also promotes CDC42-induced actin polymerization by activating the WASL-WASPIP complex, the predominant form of WASL/N-WASP in cells. Actin polymerization may promote the fission of membrane tubules to form endocytic vesicles. Essential for autophagy of intracellular bacterial pathogens. May negatively regulate neurite extension and axon branching in developing neurons. This chain is Formin-binding protein 1-like (Fnbp1l), found in Rattus norvegicus (Rat).